The primary structure comprises 389 residues: Chorismate synthase (389 aa).

NADP(+) contacts are provided by Arg-40 and Arg-46. FMN is bound by residues 131–133, 252–253, Gly-297, 312–316, and Arg-338; these read RSS, NA, and KPIPT.

The protein belongs to the chorismate synthase family. In terms of assembly, homotetramer. It depends on FMNH2 as a cofactor.

It carries out the reaction 5-O-(1-carboxyvinyl)-3-phosphoshikimate = chorismate + phosphate. It functions in the pathway metabolic intermediate biosynthesis; chorismate biosynthesis; chorismate from D-erythrose 4-phosphate and phosphoenolpyruvate: step 7/7. Functionally, catalyzes the anti-1,4-elimination of the C-3 phosphate and the C-6 proR hydrogen from 5-enolpyruvylshikimate-3-phosphate (EPSP) to yield chorismate, which is the branch point compound that serves as the starting substrate for the three terminal pathways of aromatic amino acid biosynthesis. This reaction introduces a second double bond into the aromatic ring system. In Lactiplantibacillus plantarum (strain ATCC BAA-793 / NCIMB 8826 / WCFS1) (Lactobacillus plantarum), this protein is Chorismate synthase.